A 243-amino-acid chain; its full sequence is 1-(5-phosphoribosyl)-5-[(5-phosphoribosylamino)methylideneamino] imidazole-4-carboxamide isomerase (243 aa).

The active-site Proton acceptor is the Asp10. Asp128 functions as the Proton donor in the catalytic mechanism.

The protein belongs to the HisA/HisF family.

Its subcellular location is the cytoplasm. It carries out the reaction 1-(5-phospho-beta-D-ribosyl)-5-[(5-phospho-beta-D-ribosylamino)methylideneamino]imidazole-4-carboxamide = 5-[(5-phospho-1-deoxy-D-ribulos-1-ylimino)methylamino]-1-(5-phospho-beta-D-ribosyl)imidazole-4-carboxamide. It participates in amino-acid biosynthesis; L-histidine biosynthesis; L-histidine from 5-phospho-alpha-D-ribose 1-diphosphate: step 4/9. The polypeptide is 1-(5-phosphoribosyl)-5-[(5-phosphoribosylamino)methylideneamino] imidazole-4-carboxamide isomerase (Helicobacter hepaticus (strain ATCC 51449 / 3B1)).